The primary structure comprises 1700 residues: Leucine-rich repeat-containing protein 37A2 (1700 aa).

The first 35 residues, 1–35 (MSSAQCPALVCVMSRLRFWGPWPLLMWQLLWLLVK), serve as a signal peptide directing secretion. At 36–1582 (EAQPLEWVKD…VPGYGYTDKL (1547 aa)) the chain is on the extracellular side. Positions 54 to 65 (LGPPDSWSSHSS) are enriched in polar residues. Disordered regions lie at residues 54 to 104 (LGPP…ESTE), 130 to 156 (QQDLKDKLSPQERLPVSPKKLKKDPAQ), 169 to 534 (QLST…AQPP), 559 to 580 (TEVELSPTMKETPTQPPKKVVP), 619 to 642 (PEPTTEVGHSTPPKRTIVSPKHPE), and 729 to 752 (TKPTTEVKPSPTTEETSTQPPDLG). The stretch at 137-160 (LSPQERLPVSPKKLKKDPAQRWSL) is one LRR 1 repeat. Polar residues-rich tracts occupy residues 169 to 189 (QLSTPQSQKQTLQNEYSSTDT) and 223 to 237 (ETQNPETLEDIQSSS). LRR repeat units follow at residues 230–253 (LEDIQSSSLQQEAPAQLPQLLEEE) and 267–290 (ESSMESLTLPNHEVSVQPPGEDQA). Over residues 238-249 (LQQEAPAQLPQL) the composition is skewed to low complexity. N-linked (GlcNAc...) asparagine glycosylation occurs at Asn-296. Residues 307–326 (TITSEPTNETESSQAQQETP) are compositionally biased toward polar residues. Residues 358 to 368 (SEQQQPVQPSE) show a composition bias toward low complexity. Residues 433 to 446 (LVHQEATTRLSGSG) show a composition bias toward polar residues. Positions 482-493 (SPEPINNENPSP) are enriched in low complexity. The span at 729-749 (TKPTTEVKPSPTTEETSTQPP) shows a compositional bias: low complexity. LRR repeat units follow at residues 864–887 (NGTFTILNFQGNYISYIDGNVWKA), 888–911 (YSWTEKLILRENNLTELHKDSFEG), 912–935 (LLSLQYLDLSCNKIQSIERHTFEP), 937–959 (PFLKFINLSCNVITELSFGTFQA), 963–987 (MQFLHKLILNHNPLTTVEDPYLFKL), and 1002–1027 (LTTLKNILMMTVELEKLILPSHMACC). Asn-1079 is a glycosylation site (N-linked (GlcNAc...) asparagine). One copy of the LRR 10 repeat lies at 1124-1146 (LPYFSAVNLDVKSLLLPFIKLPT). Composition is skewed to basic and acidic residues over residues 1182–1191 (VGRQSIRREQ) and 1201–1216 (AEEKRLGSPAPREVEQ). Disordered stretches follow at residues 1182 to 1227 (VGRQ…EKLA) and 1309 to 1328 (KTRSHVTHRTPKVKKSPKVR). A helical membrane pass occupies residues 1583-1603 (ILALIVTGILTILIILFCLIV). The Cytoplasmic portion of the chain corresponds to 1604–1700 (ICCHRRSLQE…TEEEESEALP (97 aa)). A compositionally biased stretch (basic and acidic residues) spans 1675 to 1685 (NEDKILNRDPG). A disordered region spans residues 1675–1700 (NEDKILNRDPGDSEAPTEEEESEALP). A compositionally biased stretch (acidic residues) spans 1689-1700 (APTEEEESEALP).

This sequence belongs to the LRRC37A family.

Its subcellular location is the membrane. The protein is Leucine-rich repeat-containing protein 37A2 (LRRC37A2) of Homo sapiens (Human).